We begin with the raw amino-acid sequence, 558 residues long: Adenine deaminase (558 aa).

This sequence belongs to the metallo-dependent hydrolases superfamily. Adenine deaminase family. Mn(2+) is required as a cofactor.

It catalyses the reaction adenine + H2O + H(+) = hypoxanthine + NH4(+). The polypeptide is Adenine deaminase (Methanoregula boonei (strain DSM 21154 / JCM 14090 / 6A8)).